An 88-amino-acid chain; its full sequence is Small ribosomal subunit protein uS15 (88 aa).

The protein belongs to the universal ribosomal protein uS15 family. As to quaternary structure, part of the 30S ribosomal subunit. Forms a bridge to the 50S subunit in the 70S ribosome, contacting the 23S rRNA.

Functionally, one of the primary rRNA binding proteins, it binds directly to 16S rRNA where it helps nucleate assembly of the platform of the 30S subunit by binding and bridging several RNA helices of the 16S rRNA. In terms of biological role, forms an intersubunit bridge (bridge B4) with the 23S rRNA of the 50S subunit in the ribosome. The protein is Small ribosomal subunit protein uS15 of Leptospira interrogans serogroup Icterohaemorrhagiae serovar copenhageni (strain Fiocruz L1-130).